Here is a 79-residue protein sequence, read N- to C-terminus: Major outer membrane lipoprotein Lpp 2 (79 aa).

An N-terminal signal peptide occupies residues 1–21 (MNRTNKLILGAVVLGSALLAG). C22 carries N-palmitoyl cysteine lipidation. Residue C22 is the site of S-diacylglycerol cysteine attachment. Repeats lie at residues 25 to 35 (NAKIDQLSSDV) and 39 to 49 (SAKVDQLSNDV). A coiled-coil region spans residues 28–76 (IDQLSSDVQTLSAKVDQLSNDVNAMRSDIQAAKDDAARANQRLDNKVSR). Residues 60 to 79 (KDDAARANQRLDNKVSRVRK) form a disordered region. K79 is modified (N6-murein peptidoglycan lysine).

Belongs to the Lpp family. As to quaternary structure, homotrimer.

The protein localises to the cell outer membrane. Its subcellular location is the secreted. It is found in the cell wall. In terms of biological role, a highly abundant outer membrane lipoprotein that controls the distance between the inner and outer membranes. The only protein known to be covalently linked to the peptidoglycan network (PGN). Also non-covalently binds the PGN. The link between the cell outer membrane and PGN contributes to maintenance of the structural and functional integrity of the cell envelope, and maintains the correct distance between the PGN and the outer membrane. The protein is Major outer membrane lipoprotein Lpp 2 of Salmonella paratyphi A (strain ATCC 9150 / SARB42).